A 371-amino-acid chain; its full sequence is MSRRERYSVEPIPNDANEFQDNVSFIHKFITNWLITDPSLRNPGSEKNVKAKNYQVQKHENVQFIYLCGGRLRSVKQKPINVVTGISILIPGILFWIFEAKWIWFHVNPSIVILFSYFWLITVSFFIKASMSDPGMLPRNIHVPYSISNANTSPKASPPDEYFNIISLPYNAEDHTGVGLKYCATCHIWRSPRASHCSVCNSCIISHDHHCVFLNNCIGYRNYKYFLWFLLFAVLGCILMSVISFIHVFYYRLGMETSVSTFRSSISKYPVSFLLCIYSLLALVYPFPLLIFHIFLTSYNLTTREYFNNVRGVKNSQNHFTNHFDTHSIFKNLYINWLGRARGFSLVRQTDSYQIGDLRFEKLDPLQSFSS.

The Cytoplasmic segment spans residues 1–79 (MSRRERYSVE…GRLRSVKQKP (79 aa)). Residues 80–100 (INVVTGISILIPGILFWIFEA) traverse the membrane as a helical segment. Residues 101 to 106 (KWIWFH) lie on the Lumenal side of the membrane. A helical membrane pass occupies residues 107 to 127 (VNPSIVILFSYFWLITVSFFI). Residues 128–225 (KASMSDPGML…NCIGYRNYKY (98 aa)) are Cytoplasmic-facing. Positions 181 to 231 (KYCATCHIWRSPRASHCSVCNSCIISHDHHCVFLNNCIGYRNYKYFLWFLL) constitute a DHHC domain. The S-palmitoyl cysteine intermediate role is filled by cysteine 211. A helical membrane pass occupies residues 226–246 (FLWFLLFAVLGCILMSVISFI). Topologically, residues 247–274 (HVFYYRLGMETSVSTFRSSISKYPVSFL) are lumenal. A helical membrane pass occupies residues 275–295 (LCIYSLLALVYPFPLLIFHIF). The Cytoplasmic segment spans residues 296 to 371 (LTSYNLTTRE…KLDPLQSFSS (76 aa)).

Belongs to the DHHC palmitoyltransferase family. ERF2/ZDHHC9 subfamily. As to quaternary structure, interacts with ERF4. In terms of processing, autopalmitoylated.

It is found in the endoplasmic reticulum membrane. It carries out the reaction L-cysteinyl-[protein] + hexadecanoyl-CoA = S-hexadecanoyl-L-cysteinyl-[protein] + CoA. Its function is as follows. The ERF2-ERF4 complex is a palmitoyltransferase specific for Ras proteins. The sequence is that of Palmitoyltransferase ERF2 (ERF2) from Debaryomyces hansenii (strain ATCC 36239 / CBS 767 / BCRC 21394 / JCM 1990 / NBRC 0083 / IGC 2968) (Yeast).